We begin with the raw amino-acid sequence, 180 residues long: uncharacterized protein (180 aa).

This sequence belongs to the CdaR family.

This is an uncharacterized protein from Thermomonospora curvata.